Here is a 220-residue protein sequence, read N- to C-terminus: uncharacterized protein (220 aa).

Residues 194–220 form a disordered region; sequence DQSQQQATKSNSKTKKLKGNHGEKTKI. Polar residues predominate over residues 195-204; that stretch reads QSQQQATKSN.

This is an uncharacterized protein from Borreliella burgdorferi (strain ATCC 35210 / DSM 4680 / CIP 102532 / B31) (Borrelia burgdorferi).